The following is a 678-amino-acid chain: AAC-rich mRNA clone AAC4 protein (678 aa).

The segment covering 55 to 73 (NNNNNNNNNNNNNNNNNNN) has biased composition (low complexity). The disordered stretch occupies residues 55-75 (NNNNNNNNNNNNNNNNNNNTS). The helical transmembrane segment at 243–263 (IIPIYHEIILVLCNWLVVAFY) threads the bilayer. Over residues 318–346 (NNNNNNNNNNNNNNNNNNNNNNNNKTNNN) the composition is skewed to low complexity. The segment at 318–347 (NNNNNNNNNNNNNNNNNNNNNNNNKTNNNQ) is disordered.

It localises to the membrane. This Dictyostelium discoideum (Social amoeba) protein is AAC-rich mRNA clone AAC4 protein (AAC4).